A 343-amino-acid polypeptide reads, in one-letter code: 2,3,4,5-tetrahydropyridine-2,6-dicarboxylate N-succinyltransferase (343 aa).

E204 provides a ligand contact to Mg(2+). E220 serves as the catalytic Acyl-anhydride intermediate. Succinyl-CoA-binding positions include R222, G237, S240, A263, 278–279, G286, K303, and 316–319; these read ES and RRNS.

The protein belongs to the type 2 tetrahydrodipicolinate N-succinyltransferase family. In terms of assembly, homotrimer.

It localises to the cytoplasm. The enzyme catalyses (S)-2,3,4,5-tetrahydrodipicolinate + succinyl-CoA + H2O = (S)-2-succinylamino-6-oxoheptanedioate + CoA. It functions in the pathway amino-acid biosynthesis; L-lysine biosynthesis via DAP pathway; LL-2,6-diaminopimelate from (S)-tetrahydrodipicolinate (succinylase route): step 1/3. Catalyzes the conversion of the cyclic tetrahydrodipicolinate (THDP) into the acyclic N-succinyl-L-2-amino-6-oxopimelate using succinyl-CoA. This is 2,3,4,5-tetrahydropyridine-2,6-dicarboxylate N-succinyltransferase from Vibrio cholerae serotype O1 (strain ATCC 39315 / El Tor Inaba N16961).